Reading from the N-terminus, the 101-residue chain is Small ribosomal subunit protein uS14 (101 aa).

The tract at residues 1–26 (MAKVSSIKKNESRKKKSQSLHNKRSA) is disordered. The span at 11–26 (ESRKKKSQSLHNKRSA) shows a compositional bias: basic residues.

This sequence belongs to the universal ribosomal protein uS14 family. As to quaternary structure, part of the 30S ribosomal subunit. Contacts proteins S3 and S10.

In terms of biological role, binds 16S rRNA, required for the assembly of 30S particles and may also be responsible for determining the conformation of the 16S rRNA at the A site. This Rickettsia felis (strain ATCC VR-1525 / URRWXCal2) (Rickettsia azadi) protein is Small ribosomal subunit protein uS14.